The primary structure comprises 353 residues: Phosphate acyltransferase (353 aa).

Belongs to the PlsX family. In terms of assembly, homodimer. Probably interacts with PlsY.

Its subcellular location is the cytoplasm. The catalysed reaction is a fatty acyl-[ACP] + phosphate = an acyl phosphate + holo-[ACP]. Its pathway is lipid metabolism; phospholipid metabolism. In terms of biological role, catalyzes the reversible formation of acyl-phosphate (acyl-PO(4)) from acyl-[acyl-carrier-protein] (acyl-ACP). This enzyme utilizes acyl-ACP as fatty acyl donor, but not acyl-CoA. The sequence is that of Phosphate acyltransferase from Bradyrhizobium sp. (strain BTAi1 / ATCC BAA-1182).